A 151-amino-acid polypeptide reads, in one-letter code: Putative pre-16S rRNA nuclease (151 aa).

It belongs to the YqgF nuclease family.

Its subcellular location is the cytoplasm. Its function is as follows. Could be a nuclease involved in processing of the 5'-end of pre-16S rRNA. This is Putative pre-16S rRNA nuclease from Thermosynechococcus vestitus (strain NIES-2133 / IAM M-273 / BP-1).